Reading from the N-terminus, the 448-residue chain is Tapasin (448 aa).

The signal sequence occupies residues 1-20 (MKSLSLLLAVALGLATAVSA). Residues 21–414 (GPAVIECWFV…LSGPSLEDSI (394 aa)) lie on the Lumenal side of the membrane. Cys27 and Cys91 form a disulfide bridge. The N-linked (GlcNAc...) asparagine glycan is linked to Asn253. Residues 292-399 (PKVSLMPATL…PASGRSAEVT (108 aa)) enclose the Ig-like C1-type domain. Residues Cys315 and Cys382 are joined by a disulfide bond. The helical transmembrane segment at 415–435 (GLFLSAFFLLGLFKALGWAAV) threads the bilayer. Topologically, residues 436-448 (YLSTCKDSKKKAE) are cytoplasmic.

Heterodimer with PDIA3; disulfide-linked. Obligatory mediator for the interaction between newly assembled MHC class I molecules, calreticulin, PDIA3 and TAP. Up to 4 MHC class I/tapasin complexes bind to 1 TAP. Interacts with HLA-G-B2M complex; this interaction is required for loading of high affinity peptides. On its own or as part of MHC class I peptide loading complex, interacts with ligand-free MR1 or MR1-B2M complex, providing for stable MR1 pools ready for metabolite antigen processing.

It localises to the endoplasmic reticulum membrane. Involved in the association of MHC class I with transporter associated with antigen processing (TAP) and in the assembly of MHC class I with peptide (peptide loading). This Chlorocebus aethiops (Green monkey) protein is Tapasin (TAPBP).